The following is a 35-amino-acid chain: Surfactant protein C (35 aa).

S-palmitoyl cysteine attachment occurs at residues Cys5 and Cys6.

Its subcellular location is the secreted. The protein resides in the extracellular space. The protein localises to the surface film. Functionally, pulmonary surfactant associated proteins promote alveolar stability by lowering the surface tension at the air-liquid interface in the peripheral air spaces. This chain is Surfactant protein C (SFTPC), found in Sus scrofa (Pig).